We begin with the raw amino-acid sequence, 205 residues long: dITP/XTP pyrophosphatase (205 aa).

Position 11 to 16 (11 to 16) interacts with substrate; sequence TKNMGK. The Mg(2+) site is built by E44 and D73. The active-site Proton acceptor is the D73. Substrate-binding positions include S74, 158–161, K181, and 186–187; these read FGYD and HR.

This sequence belongs to the HAM1 NTPase family. In terms of assembly, homodimer. The cofactor is Mg(2+).

It carries out the reaction XTP + H2O = XMP + diphosphate + H(+). It catalyses the reaction dITP + H2O = dIMP + diphosphate + H(+). The catalysed reaction is ITP + H2O = IMP + diphosphate + H(+). In terms of biological role, pyrophosphatase that catalyzes the hydrolysis of nucleoside triphosphates to their monophosphate derivatives, with a high preference for the non-canonical purine nucleotides XTP (xanthosine triphosphate), dITP (deoxyinosine triphosphate) and ITP. Seems to function as a house-cleaning enzyme that removes non-canonical purine nucleotides from the nucleotide pool, thus preventing their incorporation into DNA/RNA and avoiding chromosomal lesions. The chain is dITP/XTP pyrophosphatase from Bacillus thuringiensis subsp. konkukian (strain 97-27).